The chain runs to 605 residues: MAAEADEENCEALYVAGYLALYSKDEGELNITPEIVRSALPPTSKIPINIDHRKDCVVGEVIAIIEDIRGPFFLGIVRCPQLHAVLFEAAHSNFFGNRDSVLSPLERALYLVTNYLPSVSLSSKRLSPNEIPDGNFFTHVALCVVGRRVGTVVNYDCTPESSIEPFRVLSMESKARLLSLVKDYAGLNKVWKVSEDKLAKVLLSTAVNNMLLRDRWDVVAKRRREAGIMGHVYLQASTGYGLARITNVNGVESKLPNAGVINATFHPGGPIYDLALGVGESNEDCEKTVPHLKVTQLCRNDSDMASVAGNASNISPQPPSGVPTGGEFVLIPTAYYSQLLTGQTKNPQVSIGAPNNGQYIVGPYGSPHPPAFPPNTGGYGCPPGHFGGPYGFPGYPPPNRLEMQMSAFMNALAAERGIDLQTPCVNFPDKTDVRRPGKRDFKSMDQRELDSFYSGESQMDGEFPSNIYFPGEPTYITHRRRRVSPSYWQRRHRVSNGQHEELAGVVAKLQQEVTELKSQNGTQMPLSHHTNIPEGTRDPRISILLKQLQSVSGLCSSQNTTSTPHTDTVGQDVNAVEASSKAPLIQGSTADDADMFANQMMVGRC.

Catalysis depends on charge relay system residues His-52, Ser-120, and His-139. Positions 326-344 are interaction with pAP; it reads GEFVLIPTAYYSQLLTGQT. The segment at 585–605 is interaction with major capsid protein; sequence IQGSTADDADMFANQMMVGRC.

This sequence belongs to the herpesviridae capsid scaffolding protein family. In terms of assembly, homomultimer. Interacts with major capsid protein. As to quaternary structure, exists in a monomer-dimer equilibrium with the dimer being the active species. Post-translationally, capsid scaffolding protein is cleaved by assemblin after formation of the spherical procapsid. As a result, the capsid obtains its mature, icosahedral shape. Cleavages occur at two or more sites: release (R-site) and maturation (M-site).

The protein localises to the host cytoplasm. Its subcellular location is the host nucleus. It carries out the reaction Cleaves -Ala-|-Ser- and -Ala-|-Ala- bonds in the scaffold protein.. Acts as a scaffold protein by binding major capsid protein in the cytoplasm, inducing the nuclear localization of both proteins. Multimerizes in the nucleus such as major capsid protein forms the icosahedral T=16 capsid. Autocatalytic cleavage releases the assembly protein, and subsequently abolishes interaction with major capsid protein. Cleavages products are evicted from the capsid before or during DNA packaging. Functionally, protease that plays an essential role in virion assembly within the nucleus. Catalyzes the cleavage of the assembly protein after formation of the spherical procapsid. By that cleavage, the capsid matures and gains its icosahedral shape. The cleavage sites seem to include -Ala-Ser-, -Ala-Ala-, as well as Ala-Thr bonds. Assemblin and cleavages products are evicted from the capsid before or during DNA packaging. In terms of biological role, plays a major role in capsid assembly. Acts as a scaffold protein by binding major capsid protein. Multimerizes in the nucleus such as major capsid protein forms the icosahedral T=16 capsid. Cleaved by assemblin after capsid completion. The cleavages products are evicted from the capsid before or during DNA packaging. This Varicella-zoster virus (strain Dumas) (HHV-3) protein is Capsid scaffolding protein (33).